The chain runs to 267 residues: Formamidopyrimidine-DNA glycosylase (267 aa).

Pro-2 acts as the Schiff-base intermediate with DNA in catalysis. The Proton donor role is filled by Glu-3. The active-site Proton donor; for beta-elimination activity is Lys-53. Residues His-82 and Arg-100 each contribute to the DNA site. The FPG-type zinc finger occupies 230 to 264 (AVYGREGLPCPACGRPVERRVVAGRGTHFCPTCQG). The active-site Proton donor; for delta-elimination activity is the Arg-254.

It belongs to the FPG family. In terms of assembly, monomer. It depends on Zn(2+) as a cofactor.

The enzyme catalyses Hydrolysis of DNA containing ring-opened 7-methylguanine residues, releasing 2,6-diamino-4-hydroxy-5-(N-methyl)formamidopyrimidine.. The catalysed reaction is 2'-deoxyribonucleotide-(2'-deoxyribose 5'-phosphate)-2'-deoxyribonucleotide-DNA = a 3'-end 2'-deoxyribonucleotide-(2,3-dehydro-2,3-deoxyribose 5'-phosphate)-DNA + a 5'-end 5'-phospho-2'-deoxyribonucleoside-DNA + H(+). Functionally, involved in base excision repair of DNA damaged by oxidation or by mutagenic agents. Acts as a DNA glycosylase that recognizes and removes damaged bases. Has a preference for oxidized purines, such as 7,8-dihydro-8-oxoguanine (8-oxoG). Has AP (apurinic/apyrimidinic) lyase activity and introduces nicks in the DNA strand. Cleaves the DNA backbone by beta-delta elimination to generate a single-strand break at the site of the removed base with both 3'- and 5'-phosphates. In Thermus thermophilus (strain ATCC BAA-163 / DSM 7039 / HB27), this protein is Formamidopyrimidine-DNA glycosylase.